Reading from the N-terminus, the 341-residue chain is S-adenosylmethionine:tRNA ribosyltransferase-isomerase (341 aa).

The protein belongs to the QueA family. As to quaternary structure, monomer.

It is found in the cytoplasm. It carries out the reaction 7-aminomethyl-7-carbaguanosine(34) in tRNA + S-adenosyl-L-methionine = epoxyqueuosine(34) in tRNA + adenine + L-methionine + 2 H(+). Its pathway is tRNA modification; tRNA-queuosine biosynthesis. Functionally, transfers and isomerizes the ribose moiety from AdoMet to the 7-aminomethyl group of 7-deazaguanine (preQ1-tRNA) to give epoxyqueuosine (oQ-tRNA). The polypeptide is S-adenosylmethionine:tRNA ribosyltransferase-isomerase (Clostridium botulinum (strain Eklund 17B / Type B)).